Here is a 247-residue protein sequence, read N- to C-terminus: Vacuolar iron transporter 1 (247 aa).

At 1–33 (MVIAGVSPPTPSSENLLQEHEEKHFTATDVVRD) the chain is on the cytoplasmic side. Residues 34 to 54 (VIIGVSDGLTVPFALAAGLSG) form a helical membrane-spanning segment. Over 55-60 (ANVPSS) the chain is Vacuolar. Residues 61–81 (LILTAGIAEVAAGAISMGLGG) traverse the membrane as a helical segment. Over 82-167 (YLAAKSEEDH…PRRALESAMT (86 aa)) the chain is Cytoplasmic. 6 residues coordinate Fe cation: Glu99, Glu102, Glu110, Glu113, Met146, and Glu150. A helical membrane pass occupies residues 168-188 (IALAYVVGGLVPLSPYFFIPF). The Vacuolar segment spans residues 189 to 191 (AKQ). Residues 192-212 (AMITSIAVTLLALVVFGYIKG) form a helical membrane-spanning segment. The Cytoplasmic segment spans residues 213–219 (RFTGSNP). Residues 220–240 (VLSSIQTAIIGALASAAAYAM) form a helical membrane-spanning segment. Residues 241 to 247 (AKAVQSV) lie on the Vacuolar side of the membrane.

Belongs to the CCC1 family. Expressed at high levels in the blue epidermal cells of the inner bottom part of the petal (at protein level). No detectable expression in parenchyma and epidermis of the purple segments of the petal, parenchyma of the blue segments, leaf, stem, bulb and root (at protein level). High levels of mRNA in the blue epidermal cells of the inner bottom part of the petal. Low-levels of mRNA in the purple segments of the petal, stem, leaf, root, bulb and pistil.

The protein resides in the vacuole membrane. It carries out the reaction Fe(2+)(in) = Fe(2+)(out). Vacuolar iron transporter involved in the transfer of iron ions from the cytosol to the vacuole for intracellular iron storage. Plays an essential role in the development of blue coloration in tulip petals most likely due to the accumulation of ferrous ions that can form complexes with anthocyanins. The sequence is that of Vacuolar iron transporter 1 from Tulipa gesneriana (Garden tulip).